Consider the following 122-residue polypeptide: Neuropeptide B (122 aa).

An N-terminal signal peptide occupies residues 1 to 24; that stretch reads MAGPAMLVAAALALCLLLASPGLA. A 6'-bromotryptophan modification is found at Trp25. Positions 56 to 122 are excised as a propeptide; sequence SEPRGGTRSL…LSLSASDCRK (67 aa).

Belongs to the neuropeptide B/W family.

It localises to the secreted. In terms of biological role, may be involved in the regulation of feeding, neuroendocrine system, memory, learning and in the afferent pain pathway. This is Neuropeptide B (NPB) from Bos taurus (Bovine).